The chain runs to 416 residues: MEYSDDGRFDVIVVGAGVMGSSAAYQLAKRGQKTLLLEQFDFLHHRGSSHGESRTIRATYPEDYYYSMVSESTRLWAAAQSEIGYKVHFPTQQFDMGPADQQSLLSVVATCQKHGLAHRVMDSHAVSEHFSGRISIPENWIGVSTELGGIIKPTKAVSMFQTLAIGHGAILRDNTKVANIKRDGESGEGVIVCTVKGDKFYGKKCIVTAGAWISKLVKTVAGIDFPVEPLETTVCYWRIKEGHEEKFTIDGEFPTFASYGAPYVYGTPSLEYPGLIKVAVHGGYWCDPDKRPWGPGVKLEELKEWIKERFGGMVDSEGPVATQLCMYSMTPDEDFVIDFLGGEFGRDVVVGGGFSGHGFKMAPAVGRILADMAMEVEAGGGGVEMKQFSLRRFEDNPKGNAKEYPDQVILDVPLKH.

10–40 (DVIVVGAGVMGSSAAYQLAKRGQKTLLLEQF) provides a ligand contact to FAD. Position 325 is an S-8alpha-FAD cysteine (Cys-325).

The protein belongs to the MSOX/MTOX family. FAD serves as cofactor.

The catalysed reaction is sarcosine + O2 + H2O = formaldehyde + glycine + H2O2. The protein is Probable sarcosine oxidase of Arabidopsis thaliana (Mouse-ear cress).